A 497-amino-acid chain; its full sequence is Putative BTB/POZ domain-containing protein R738 (497 aa).

The region spanning 16–86 is the BTB domain; that stretch reads SDCKLVLDDG…FYEKSNVINA (71 aa).

It belongs to the mimivirus BTB/WD family.

In Acanthamoeba polyphaga (Amoeba), this protein is Putative BTB/POZ domain-containing protein R738.